The sequence spans 212 residues: Large ribosomal subunit protein bL25 (212 aa).

The segment at 1–25 (MSQSTIHKIAVKKRTETGKNENNRL) is disordered. The span at 13–24 (KRTETGKNENNR) shows a compositional bias: basic and acidic residues.

Belongs to the bacterial ribosomal protein bL25 family. CTC subfamily. As to quaternary structure, part of the 50S ribosomal subunit; part of the 5S rRNA/L5/L18/L25 subcomplex. Contacts the 5S rRNA. Binds to the 5S rRNA independently of L5 and L18.

This is one of the proteins that binds to the 5S RNA in the ribosome where it forms part of the central protuberance. The chain is Large ribosomal subunit protein bL25 from Leptospira borgpetersenii serovar Hardjo-bovis (strain L550).